Here is a 716-residue protein sequence, read N- to C-terminus: Phenylalanine/tyrosine ammonia-lyase (716 aa).

The Proton donor/acceptor role is filled by Tyr110. Residues 211 to 213 (ASG) constitute a cross-link (5-imidazolinone (Ala-Gly)). Residue Ser212 is modified to 2,3-didehydroalanine (Ser). Asn270, Gln360, Arg366, Asn397, Lys468, Glu496, and Asn499 together coordinate (E)-cinnamate.

It belongs to the PAL/histidase family. Homotetramer. Dimer of dimers. In terms of processing, contains an active site 4-methylidene-imidazol-5-one (MIO), which is formed autocatalytically by cyclization and dehydration of residues Ala-Ser-Gly.

It localises to the cytoplasm. The enzyme catalyses L-phenylalanine = (E)-cinnamate + NH4(+). It catalyses the reaction L-tyrosine = (E)-4-coumarate + NH4(+). Its pathway is phenylpropanoid metabolism; trans-cinnamate biosynthesis; trans-cinnamate from L-phenylalanine: step 1/1. Its function is as follows. Catalyzes the non-oxidative deamination of L-phenylalanine and L-tyrosine to form trans-cinnamic acid and p-coumaric acid respectively with similar efficiencies. Facilitates the commitment step in phenylpropanoid pathways that produce secondary metabolites such as lignins, coumarins and flavonoids. The protein is Phenylalanine/tyrosine ammonia-lyase (PAL) of Rhodotorula toruloides (Yeast).